The chain runs to 366 residues: MWNATPSEEPGPNLTLPDLGWDAPPENDSLVEELLPLFPTPLLAGVTATCVALFVVGIAGNLLTMLVVSRFREMRTTTNLYLSSMAFSDLLIFLCMPLDLFRLWQYRPWNLGNLLCKLFQFVSESCTYATVLTITALSVERYFAICFPLRAKVVVTKGRVKLVILVIWAVAFCSAGPIFVLVGVEHDNGTDPRDTNECRATEFAVRSGLLTVMVWVSSVFFFLPVFCLTVLYSLIGRKLWRRKRGEAAVGSSLRDQNHKQTVKMLAVVVFAFILCWLPFHVGRYLFSKSLEPGSVEIAQISQYCNLVSFVLFYLSAAINPILYNIMSKKYRVAVFKLLGFEPFSQRKLSTLKDESSRAWTESSINT.

The Extracellular segment spans residues 1-40 (MWNATPSEEPGPNLTLPDLGWDAPPENDSLVEELLPLFPT). N-linked (GlcNAc...) asparagine glycosylation is found at Asn-13 and Asn-27. A helical membrane pass occupies residues 41–66 (PLLAGVTATCVALFVVGIAGNLLTML). The Cytoplasmic portion of the chain corresponds to 67 to 72 (VVSRFR). The helical transmembrane segment at 73–96 (EMRTTTNLYLSSMAFSDLLIFLCM) threads the bilayer. The Extracellular portion of the chain corresponds to 97–117 (PLDLFRLWQYRPWNLGNLLCK). Cys-116 and Cys-198 are oxidised to a cystine. Residues 118 to 139 (LFQFVSESCTYATVLTITALSV) form a helical membrane-spanning segment. Topologically, residues 140 to 162 (ERYFAICFPLRAKVVVTKGRVKL) are cytoplasmic. A helical transmembrane segment spans residues 163–183 (VILVIWAVAFCSAGPIFVLVG). Topologically, residues 184–211 (VEHDNGTDPRDTNECRATEFAVRSGLLT) are extracellular. Residues 212–235 (VMVWVSSVFFFLPVFCLTVLYSLI) traverse the membrane as a helical segment. At 236–263 (GRKLWRRKRGEAAVGSSLRDQNHKQTVK) the chain is on the cytoplasmic side. The helical transmembrane segment at 264 to 285 (MLAVVVFAFILCWLPFHVGRYL) threads the bilayer. Residues 286–302 (FSKSLEPGSVEIAQISQ) lie on the Extracellular side of the membrane. The helical transmembrane segment at 303–326 (YCNLVSFVLFYLSAAINPILYNIM) threads the bilayer. Topologically, residues 327 to 366 (SKKYRVAVFKLLGFEPFSQRKLSTLKDESSRAWTESSINT) are cytoplasmic.

This sequence belongs to the G-protein coupled receptor 1 family. As to expression, pituitary and hypothalamus.

It localises to the cell membrane. Its function is as follows. Receptor for ghrelin, coupled to G-alpha-11 proteins. Stimulates growth hormone secretion. Also binds other growth hormone releasing peptides (GHRP) (e.g. Met-enkephalin and GHRP-6) as well as non-peptide, low molecular weight secretagogues (e.g. L-692,429, MK-0677, adenosine). The sequence is that of Growth hormone secretagogue receptor type 1 (GHSR) from Sus scrofa (Pig).